The sequence spans 441 residues: Deoxyguanosinetriphosphate triphosphohydrolase-like protein (441 aa).

An HD domain is found at 62 to 255 (RLTHSLEAAQ…MELADDIAYG (194 aa)).

This sequence belongs to the dGTPase family. Type 2 subfamily.

In Vibrio cholerae serotype O1 (strain ATCC 39541 / Classical Ogawa 395 / O395), this protein is Deoxyguanosinetriphosphate triphosphohydrolase-like protein (dgt).